A 484-amino-acid chain; its full sequence is Acetaldehyde dehydrogenase (acetylating) (484 aa).

It belongs to the aldehyde dehydrogenase family.

The enzyme catalyses acetaldehyde + NAD(+) + CoA = acetyl-CoA + NADH + H(+). It participates in organosulfur degradation; alkanesulfonate degradation. Functionally, involved in an anaerobic respiration pathway that converts the sulfonate taurine (2-aminoethanesulfonate) to ammonia, acetate and sulfide. Catalyzes the oxidation of acetaldehyde to acetyl-CoA in the presence of CoASH and NAD(+). Highly prefers NAD(+) over NADP(+). This is Acetaldehyde dehydrogenase (acetylating) from Bilophila wadsworthia (strain 3_1_6).